Reading from the N-terminus, the 156-residue chain is MRSSAKQEELVKAFKALLKEEKFSSQGEIVAALQEQGFDNINQSKVSRMLTKFGAVRTRNAKMEMVYCLPAELGVPTTSSPLKNLVLDIDYNDAVVVIHTSPGAAQLIARLLDSLGKAEGILGTIAGDDTIFTTPANGFTVKELYEAILELFDQEL.

The protein belongs to the ArgR family.

The protein resides in the cytoplasm. The protein operates within amino-acid biosynthesis; L-arginine biosynthesis [regulation]. In terms of biological role, regulates arginine biosynthesis genes. In Escherichia coli O81 (strain ED1a), this protein is Arginine repressor.